A 239-amino-acid polypeptide reads, in one-letter code: tRNA (guanine-N(7)-)-methyltransferase (239 aa).

Residues glutamate 69, glutamate 94, aspartate 121, and aspartate 144 each contribute to the S-adenosyl-L-methionine site. Aspartate 144 is an active-site residue. Residue lysine 148 participates in substrate binding. Residues 150 to 155 (RHNKRR) are interaction with RNA. Substrate is bound by residues aspartate 180 and 217–220 (TKFE).

This sequence belongs to the class I-like SAM-binding methyltransferase superfamily. TrmB family. Monomer.

It catalyses the reaction guanosine(46) in tRNA + S-adenosyl-L-methionine = N(7)-methylguanosine(46) in tRNA + S-adenosyl-L-homocysteine. The protein operates within tRNA modification; N(7)-methylguanine-tRNA biosynthesis. In terms of biological role, catalyzes the formation of N(7)-methylguanine at position 46 (m7G46) in tRNA. The protein is tRNA (guanine-N(7)-)-methyltransferase of Salmonella typhi.